Here is a 471-residue protein sequence, read N- to C-terminus: Alpha-galactosidase (471 aa).

The N-terminal stretch at 1–18 (MFLLYLFTSFAAVSGVLG) is a signal peptide. Cysteines 42 and 74 form a disulfide. Residues D72 and D73 each coordinate substrate. N82 carries an N-linked (GlcNAc...) asparagine glycan. C121 and C151 are disulfide-bonded. Residue K147 participates in substrate binding. Catalysis depends on D149, which acts as the Nucleophile. A glycan (N-linked (GlcNAc...) asparagine) is linked at N175. Residue R205 participates in substrate binding. The active-site Proton donor is the D209. Cystine bridges form between C221–C237 and C223–C230. A substrate-binding site is contributed by Q251. N-linked (GlcNAc...) asparagine glycosylation is found at N270, N403, N412, N417, N422, N435, and N454.

This sequence belongs to the glycosyl hydrolase 27 family. Homotetramer.

The protein localises to the secreted. The enzyme catalyses Hydrolysis of terminal, non-reducing alpha-D-galactose residues in alpha-D-galactosides, including galactose oligosaccharides, galactomannans and galactolipids.. In Saccharomyces pastorianus (strain ATCC 76529 / Carlsberg bottom yeast no.1 / CBS 1513 / CLIB 176 / NBRC 1167 / NCYC 396 / NRRL Y-12693) (Saaz-type lager yeast), this protein is Alpha-galactosidase (MEL).